The primary structure comprises 306 residues: Solute carrier family 25 member 48 (306 aa).

Solcar repeat units lie at residues 3–86, 101–200, and 209–296; these read SFQL…TQRF, RSLS…LSEW, and PSPY…SLKA. 6 consecutive transmembrane segments (helical) span residues 9-29, 61-81, 107-127, 184-204, 212-232, and 272-290; these read FVAG…LDTV, GMSF…GVFS, LLAS…VELI, IPGY…ITPE, YAAW…ATPM, and ITVN…FLGY.

The protein belongs to the mitochondrial carrier (TC 2.A.29) family.

It is found in the mitochondrion inner membrane. This Mus musculus (Mouse) protein is Solute carrier family 25 member 48 (Slc25a48).